Reading from the N-terminus, the 159-residue chain is Probable inactive acireductone dioxygenase 2 (159 aa).

The protein belongs to the acireductone dioxygenase (ARD) family.

The protein resides in the cytoplasm. The protein localises to the nucleus. Its function is as follows. Probable inactive acireductone dioxygenase. This Caenorhabditis briggsae protein is Probable inactive acireductone dioxygenase 2.